A 201-amino-acid polypeptide reads, in one-letter code: ATP-dependent Clp protease proteolytic subunit 1 (201 aa).

The active-site Nucleophile is Ser102. The active site involves His127.

It belongs to the peptidase S14 family. Fourteen ClpP subunits assemble into 2 heptameric rings which stack back to back to give a disk-like structure with a central cavity, resembling the structure of eukaryotic proteasomes.

The protein resides in the cytoplasm. It carries out the reaction Hydrolysis of proteins to small peptides in the presence of ATP and magnesium. alpha-casein is the usual test substrate. In the absence of ATP, only oligopeptides shorter than five residues are hydrolyzed (such as succinyl-Leu-Tyr-|-NHMec, and Leu-Tyr-Leu-|-Tyr-Trp, in which cleavage of the -Tyr-|-Leu- and -Tyr-|-Trp bonds also occurs).. Functionally, cleaves peptides in various proteins in a process that requires ATP hydrolysis. Has a chymotrypsin-like activity. Plays a major role in the degradation of misfolded proteins. The protein is ATP-dependent Clp protease proteolytic subunit 1 of Mesorhizobium japonicum (strain LMG 29417 / CECT 9101 / MAFF 303099) (Mesorhizobium loti (strain MAFF 303099)).